Here is a 273-residue protein sequence, read N- to C-terminus: Transmembrane epididymal protein 1 (273 aa).

A run of 6 helical transmembrane segments spans residues 34–54 (IVTGSLLTFYVVLCLDGGMVL), 72–92 (LTMFILLTLNGCVDFMSKNVL), 96–116 (CVGLEKGTLVLIIYELLLLMV), 129–149 (VYSLLILVVFLLLLVLTAELW), 158–178 (LMETFLILMMGSWLMQAGFIL), and 195–215 (IMFVTTFFCWHVMINASFLLG).

Belongs to the TMEM45 family.

The protein resides in the membrane. In Homo sapiens (Human), this protein is Transmembrane epididymal protein 1 (TEDDM1).